The following is a 298-amino-acid chain: ATP synthase gamma chain (298 aa).

This sequence belongs to the ATPase gamma chain family. F-type ATPases have 2 components, CF(1) - the catalytic core - and CF(0) - the membrane proton channel. CF(1) has five subunits: alpha(3), beta(3), gamma(1), delta(1), epsilon(1). CF(0) has three main subunits: a, b and c.

Its subcellular location is the cell membrane. Functionally, produces ATP from ADP in the presence of a proton gradient across the membrane. The gamma chain is believed to be important in regulating ATPase activity and the flow of protons through the CF(0) complex. This is ATP synthase gamma chain from Frankia casuarinae (strain DSM 45818 / CECT 9043 / HFP020203 / CcI3).